Here is a 938-residue protein sequence, read N- to C-terminus: Isoleucine--tRNA ligase (938 aa).

Positions 58 to 68 (PYANGSIHIGH) match the 'HIGH' region motif. Residue Lys183 is modified to N6-acetyllysine. L-isoleucyl-5'-AMP is bound at residue Glu561. Residues 602–606 (KMSKS) carry the 'KMSKS' region motif. Lys605 is a binding site for ATP. Residues Cys901, Cys904, Cys921, and Cys924 each contribute to the Zn(2+) site.

The protein belongs to the class-I aminoacyl-tRNA synthetase family. IleS type 1 subfamily. In terms of assembly, monomer. It depends on Zn(2+) as a cofactor.

The protein localises to the cytoplasm. The catalysed reaction is tRNA(Ile) + L-isoleucine + ATP = L-isoleucyl-tRNA(Ile) + AMP + diphosphate. Its function is as follows. Catalyzes the attachment of isoleucine to tRNA(Ile). As IleRS can inadvertently accommodate and process structurally similar amino acids such as valine, to avoid such errors it has two additional distinct tRNA(Ile)-dependent editing activities. One activity is designated as 'pretransfer' editing and involves the hydrolysis of activated Val-AMP. The other activity is designated 'posttransfer' editing and involves deacylation of mischarged Val-tRNA(Ile). The polypeptide is Isoleucine--tRNA ligase (Shigella boydii serotype 4 (strain Sb227)).